A 580-amino-acid chain; its full sequence is Conglutin beta 3 (580 aa).

Residues 1–30 (MAKMRVRFPTLVLLLGIVFLMAVSIGIAYG) form the signal peptide. 2 stretches are compositionally biased toward basic and acidic residues: residues 37–72 (NHER…RESE) and 79–92 (REQR…REQE). A disordered region spans residues 37–165 (NHERPQEREQ…DSRRQRNPYY (129 aa)). Positions 124–133 (QGSSSSSRRQ) are enriched in low complexity. A compositionally biased stretch (basic and acidic residues) spans 134–145 (SGYERREQREER). 2 consecutive Cupin type-1 domains span residues 164–322 (YYFS…EEIQ) and 381–538 (FNLR…EDVE). Asn229 and Asn488 each carry an N-linked (GlcNAc...) asparagine glycan. A disordered region spans residues 549–569 (FANAQPQQQQQREREGRHGRR).

The protein belongs to the 7S seed storage protein family. As to quaternary structure, component of globulins complexes which accumulate in seeds.

Its function is as follows. Seed storage protein. Accumulates during seed development and is hydrolyzed after germination to provide a carbon and nitrogen source for the developing seedling. This Lupinus angustifolius (Narrow-leaved blue lupine) protein is Conglutin beta 3.